Consider the following 229-residue polypeptide: Germin-like protein 2-4 (229 aa).

The N-terminal stretch at 1–23 (MAHRRRCLLLLLAVLLPAMAARG) is a signal peptide. Cysteines 32 and 52 form a disulfide. N-linked (GlcNAc...) asparagine glycosylation occurs at N57. One can recognise a Cupin type-1 domain in the interval 66–213 (SGVRAAGNFS…AFGLTPAELR (148 aa)). Positions 115, 117, 122, and 161 each coordinate Mn(2+).

The protein belongs to the germin family. Oligomer (believed to be a pentamer but probably hexamer).

Its subcellular location is the secreted. It localises to the extracellular space. The protein resides in the apoplast. Its function is as follows. May play a role in plant defense. Probably has no oxalate oxidase activity even if the active site is conserved. This Oryza sativa subsp. japonica (Rice) protein is Germin-like protein 2-4.